Reading from the N-terminus, the 614-residue chain is Sodium- and chloride-dependent betaine transporter (614 aa).

Residues 1-44 lie on the Cytoplasmic side of the membrane; the sequence is MDRKVAVHEDGYPVVSWVPEEGEMMDQKGKDQVKDRGQWTNKME. The next 3 helical transmembrane spans lie at 45–65, 73–92, and 117–137; these read FVLS…FPYL, AFFI…VFFL, and GIGM…IIIL. Over 138-210 the chain is Extracellular; it reads AWALFYLFSS…SGIHDLGSLR (73 aa). A disulfide bridge links Cys-157 with Cys-166. 2 N-linked (GlcNAc...) asparagine glycosylation sites follow: Asn-171 and Asn-183. 9 consecutive transmembrane segments (helical) span residues 211-229, 238-255, 291-308, 320-341, 374-393, 423-441, 458-478, 499-518, and 538-556; these read WELA…FCIW, VVYF…ILLI, IFFS…LGSY, IALC…FSIL, MPLS…FLGL, VLIL…LLVT, GICL…VYGA, ISWL…FSLS, and IGWL…FIII. Over 557–614 the chain is Cytoplasmic; sequence TFLKTQGSFKKRLRRLITPDPSLPQPGRRPPQDGSSAQNCSSSPAKQELIAWEKETHL. The interval 574-602 is disordered; that stretch reads TPDPSLPQPGRRPPQDGSSAQNCSSSPAK. Residues 589–601 are compositionally biased toward polar residues; sequence DGSSAQNCSSSPA.

This sequence belongs to the sodium:neurotransmitter symporter (SNF) (TC 2.A.22) family. SLC6A12 subfamily. As to quaternary structure, interacts with LIN7C. In terms of tissue distribution, predominantly expressed in the liver (sinusoidal hepatocyte plasma membranes), also present in the renal medulla, where it localizes to the basolateral membranes of collecting ducts (particularly at the papilla tip) and the thick ascending limbs of Henle (at protein level). Some expression is detected in the leptomeninges, but no expression is detected in brain parenchyma, brain blood vessels, ependymal cells, the renal cortex and the intestine.

The protein localises to the basolateral cell membrane. The protein resides in the cell membrane. The enzyme catalyses 4-aminobutanoate(out) + chloride(out) + 3 Na(+)(out) = 4-aminobutanoate(in) + chloride(in) + 3 Na(+)(in). The catalysed reaction is glycine betaine(out) + 2 chloride(out) + 3 Na(+)(out) = glycine betaine(in) + 2 chloride(in) + 3 Na(+)(in). In terms of biological role, transporter that mediates cellular uptake of betaine and GABA in a sodium- and chloride-dependent process. May have a role in regulation of GABAergic transmission in the brain through the reuptake of GABA into presynaptic terminals, as well as in osmotic regulation. Probably also involved in renal and hepatic osmotic regulation. The chain is Sodium- and chloride-dependent betaine transporter (Slc6a12) from Mus musculus (Mouse).